Reading from the N-terminus, the 259-residue chain is MAALMRVKDSSRCLLLLAAVLMVESSQLGSSRAKLNSIKSSLGGETPAQSANRSAGMNQGLAFGGSKKGKSLGQAYPCSSDKECEVGRYCHSPHQGSSACMLCRRKKKRCHRDGMCCPGTRCNNGICIPVTESILTPHIPALDGTRHRDRNHGHYSNHDLGWQNLGRPHSKMPHIKGHEGDPCLRSSDCIDGFCCARHFWTKICKPVLHQGEVCTKQRKKGSHGLEIFQRCDCAKGLSCKVWKDATYSSKARLHVCQKI.

Residues 1–33 (MAALMRVKDSSRCLLLLAAVLMVESSQLGSSRA) form the signal peptide. Residues 42 to 70 (LGGETPAQSANRSAGMNQGLAFGGSKKGK) are disordered. Over residues 47–57 (PAQSANRSAGM) the composition is skewed to polar residues. An N-linked (GlcNAc...) asparagine glycan is attached at N52. The tract at residues 78 to 127 (CSSDKECEVGRYCHSPHQGSSACMLCRRKKKRCHRDGMCCPGTRCNNGIC) is DKK-type Cys-1. 5 cysteine pairs are disulfide-bonded: C183–C195, C189–C204, C194–C231, C214–C239, and C233–C256. Residues 183-256 (CLRSSDCIDG…YSSKARLHVC (74 aa)) form a DKK-type Cys-2 region.

This sequence belongs to the dickkopf family. As to quaternary structure, interacts with LRP5 and LRP6. May be proteolytically processed by a furin-like protease.

Its subcellular location is the secreted. Functionally, antagonizes canonical Wnt signaling by inhibiting LRP5/6 interaction with Wnt and by forming a ternary complex with the transmembrane protein KREMEN that promotes internalization of LRP5/6. DKKs play an important role in vertebrate development, where they locally inhibit Wnt regulated processes such as antero-posterior axial patterning, limb development, somitogenesis and eye formation. In the adult, Dkks are implicated in bone formation and bone disease, cancer and Alzheimer disease. The protein is Dickkopf-related protein 2 of Mus musculus (Mouse).